Consider the following 309-residue polypeptide: Sporulation sigma-E factor-processing peptidase (309 aa).

5 helical membrane passes run 7–27 (VIWL…AFIL), 36–55 (LVGG…TPFS), 61–78 (PAGK…TFGF), 88–105 (LFSF…IIGA), and 130–147 (PISW…WFFS). Residue Asp-183 is part of the active site.

This sequence belongs to the peptidase U4 family. Self-associates. Interacts with SigE. Interacts with SpoIIR.

The protein localises to the cell membrane. Functionally, probable aspartic protease that is responsible for the proteolytic cleavage of the RNA polymerase sigma E factor (SigE/spoIIGB) to yield the active peptide in the mother cell during sporulation. Responds to a signal from the forespore that is triggered by the extracellular signal protein SpoIIR. The protein is Sporulation sigma-E factor-processing peptidase (spoIIGA) of Bacillus subtilis (strain 168).